A 5043-amino-acid polypeptide reads, in one-letter code: Polyketide synthase PksJ (5043 aa).

Positions 141 to 481 (AVITDRGMHQ…ELPEIETSYT (341 aa)) are adenylation 1. In terms of domain architecture, Carrier 1 spans 590–667 (RVREEIQKHL…RLASYLSEHE (78 aa)). The residue at position 627 (Ser627) is an O-(pantetheine 4'-phosphoryl)serine. Residues 690 to 989 (QATFQPLSEV…NMLPIRSELN (300 aa)) form a condensation region. Residues 1181–1578 (TYRELDEKST…EHPGILECVV (398 aa)) form an adenylation 2 region. The 76-residue stretch at 1654 to 1729 (TSPKNIQDTV…NISQYITEQR (76 aa)) folds into the Carrier 2 domain. Ser1689 bears the O-(pantetheine 4'-phosphoryl)serine mark. Residues 1760–2186 (DDSVAIIGIS…GTNTHAIFEQ (427 aa)) enclose the Ketosynthase family 3 (KS3) 1 domain. Residues Cys1932, His2068, and His2108 each act as for beta-ketoacyl synthase 1 activity in the active site. Residues 2374-2499 (HPLLHQNTSD…GSAELASAAE (126 aa)) are N-terminal hotdog fold. Positions 2374–2661 (HPLLHQNTSD…TRVLEGEVHT (288 aa)) constitute a PKS/mFAS DH domain. His2403 serves as the catalytic Proton acceptor; for dehydratase activity. The segment at 2513 to 2661 (GKGKMSPDQF…TRVLEGEVHT (149 aa)) is C-terminal hotdog fold. Asp2575 (proton donor; for dehydratase activity) is an active-site residue. 2 Carrier domains span residues 3114-3188 (RKLE…VAAY) and 3212-3286 (SSLE…TVEH). An O-(pantetheine 4'-phosphoryl)serine mark is found at Ser3148 and Ser3246. The tract at residues 3291–3314 (VQEREKPEGQEELQTKSSEAPKIT) is disordered. Residues 3339 to 3779 (FEPVAIVGIS…GVNAHIVIEE (441 aa)) form the Ketosynthase family 3 (KS3) 2 domain. Catalysis depends on for beta-ketoacyl synthase 2 activity residues Cys3511, His3646, and His3695. Positions 3839–3872 (REEMDERLACVAGTMQELEEKLQAFVDGKEETDE) form a coiled coil. Residues 4459 to 4536 (GLLSETQSWL…RFADWLIGSY (78 aa)) enclose the Carrier 5 domain. Residue Ser4496 is modified to O-(pantetheine 4'-phosphoryl)serine. The 405-residue stretch at 4588–4992 (AEGIAVVGLS…GTNAHVIVEA (405 aa)) folds into the Ketosynthase family 3 (KS3) 3 domain. The active-site For beta-ketoacyl synthase 3 activity is the Cys4743.

It belongs to the ATP-dependent AMP-binding enzyme family. Pantetheine 4'-phosphate is required as a cofactor.

Its subcellular location is the cytoplasm. The protein operates within antibiotic biosynthesis; bacillaene biosynthesis. Its function is as follows. Involved in some intermediate steps for the synthesis of the antibiotic polyketide bacillaene which is involved in secondary metabolism. The protein is Polyketide synthase PksJ (pksJ) of Bacillus subtilis (strain 168).